The following is a 403-amino-acid chain: Argininosuccinate synthase (403 aa).

Residue 10–18 participates in ATP binding; that stretch reads AYSGGLDTS. Tyr87 contributes to the L-citrulline binding site. Gly117 contributes to the ATP binding site. L-aspartate-binding residues include Thr119, Asn123, and Asp124. Asn123 contacts L-citrulline. L-citrulline-binding residues include Arg127, Ser175, Ser184, Glu260, and Tyr272.

It belongs to the argininosuccinate synthase family. Type 1 subfamily. As to quaternary structure, homotetramer.

The protein localises to the cytoplasm. It catalyses the reaction L-citrulline + L-aspartate + ATP = 2-(N(omega)-L-arginino)succinate + AMP + diphosphate + H(+). The protein operates within amino-acid biosynthesis; L-arginine biosynthesis; L-arginine from L-ornithine and carbamoyl phosphate: step 2/3. This is Argininosuccinate synthase from Bacillus licheniformis (strain ATCC 14580 / DSM 13 / JCM 2505 / CCUG 7422 / NBRC 12200 / NCIMB 9375 / NCTC 10341 / NRRL NRS-1264 / Gibson 46).